The chain runs to 147 residues: Adenylylsulfatase HINT1 (147 aa).

Residues 37–147 (IFDKIISKEI…GGRQMNWPPG (111 aa)) enclose the HIT domain. Residues 131–135 (HIHVH) carry the Histidine triad motif motif. The active-site Tele-AMP-histidine intermediate is H133. H135 contributes to the substrate binding site.

It is found in the peroxisome. Its subcellular location is the plastid. The protein resides in the chloroplast. It catalyses the reaction adenosine 5'-phosphosulfate + H2O = sulfate + AMP + 2 H(+). Possesses adenylylsulfatase activity in vitro. The polypeptide is Adenylylsulfatase HINT1 (Arabidopsis thaliana (Mouse-ear cress)).